Here is a 56-residue protein sequence, read N- to C-terminus: Small ribosomal subunit protein uS14 (56 aa).

Zn(2+) contacts are provided by Cys-21, Cys-24, Cys-39, and Cys-42.

Belongs to the universal ribosomal protein uS14 family. As to quaternary structure, component of the 40S small ribosomal subunit. Requires Zn(2+) as cofactor.

Its subcellular location is the cytoplasm. It is found in the cytosol. The protein localises to the rough endoplasmic reticulum. The chain is Small ribosomal subunit protein uS14 (RpS29) from Scarabaeus laticollis (Scarab dung beetle).